The chain runs to 447 residues: Phosphoglucosamine mutase (447 aa).

The active-site Phosphoserine intermediate is the S100. Mg(2+) contacts are provided by S100, D240, D242, and D244. S100 is subject to Phosphoserine.

This sequence belongs to the phosphohexose mutase family. Mg(2+) is required as a cofactor. Activated by phosphorylation.

The enzyme catalyses alpha-D-glucosamine 1-phosphate = D-glucosamine 6-phosphate. Catalyzes the conversion of glucosamine-6-phosphate to glucosamine-1-phosphate. The chain is Phosphoglucosamine mutase from Clostridium botulinum (strain Eklund 17B / Type B).